The sequence spans 74 residues: Protein SlyX homolog (74 aa).

The protein belongs to the SlyX family.

This Aliivibrio salmonicida (strain LFI1238) (Vibrio salmonicida (strain LFI1238)) protein is Protein SlyX homolog.